The sequence spans 331 residues: tRNA pseudouridine synthase B (331 aa).

The active-site Nucleophile is aspartate 51.

This sequence belongs to the pseudouridine synthase TruB family. Type 1 subfamily.

It carries out the reaction uridine(55) in tRNA = pseudouridine(55) in tRNA. Responsible for synthesis of pseudouridine from uracil-55 in the psi GC loop of transfer RNAs. This Verminephrobacter eiseniae (strain EF01-2) protein is tRNA pseudouridine synthase B.